Consider the following 178-residue polypeptide: MMMMDLGFLEGGAGMADAGHDESGSPPRSGGVREQDRFLPIANISRIMKKAVPANGKIAKDAKETLQECVSEFISFVTSEASDKCQKEKRKTINGEDLLFAMGTLGFEEYVDPLKIYLHKYREVIGDSKLSSKAGDGSVKKDTIGPHSGASSSSAQGMVGAYTQGMGYMQPQYHNGDT.

A DNA-binding region spans residues 39 to 45; the sequence is LPIANIS. The segment at 66–77 is subunit association domain (SAD); sequence LQECVSEFISFV. The tract at residues 131–156 is disordered; it reads SSKAGDGSVKKDTIGPHSGASSSSAQ.

Belongs to the NFYB/HAP3 subunit family. As to quaternary structure, heterotrimeric transcription factor composed of three components, NF-YA, NF-YB and NF-YC. NF-YB and NF-YC must interact and dimerize for NF-YA association and DNA binding. Interacts with NFYC4 and NFYC6. In terms of tissue distribution, ubiquitous.

The protein resides in the nucleus. Component of the NF-Y/HAP transcription factor complex. The NF-Y complex stimulates the transcription of various genes by recognizing and binding to a CCAAT motif in promoters. May regulate the expression of photosynthetic genes, and may be involved in chloroplast and amyloplast development. The chain is Nuclear transcription factor Y subunit B-2 (NFYB2) from Oryza sativa subsp. japonica (Rice).